The chain runs to 767 residues: 5-methyltetrahydropteroyltriglutamate--homocysteine methyltransferase (767 aa).

5-methyltetrahydropteroyltri-L-glutamate-binding positions include 17–20 (RELK) and Lys117. L-homocysteine contacts are provided by residues 441–443 (IGS) and Glu494. Residues 441 to 443 (IGS) and Glu494 contribute to the L-methionine site. 5-methyltetrahydropteroyltri-L-glutamate-binding positions include 525-526 (RC) and Trp571. Residue Asp609 participates in L-homocysteine binding. Position 609 (Asp609) interacts with L-methionine. Glu615 serves as a coordination point for 5-methyltetrahydropteroyltri-L-glutamate. Zn(2+)-binding residues include His652, Cys654, and Glu676. His705 acts as the Proton donor in catalysis. Cys737 contributes to the Zn(2+) binding site.

Belongs to the vitamin-B12 independent methionine synthase family. Zn(2+) serves as cofactor.

The catalysed reaction is 5-methyltetrahydropteroyltri-L-glutamate + L-homocysteine = tetrahydropteroyltri-L-glutamate + L-methionine. It participates in amino-acid biosynthesis; L-methionine biosynthesis via de novo pathway; L-methionine from L-homocysteine (MetE route): step 1/1. Its function is as follows. Catalyzes the transfer of a methyl group from 5-methyltetrahydrofolate to homocysteine resulting in methionine formation. The protein is 5-methyltetrahydropteroyltriglutamate--homocysteine methyltransferase of Bifidobacterium longum subsp. infantis (strain ATCC 15697 / DSM 20088 / JCM 1222 / NCTC 11817 / S12).